The primary structure comprises 325 residues: Malate dehydrogenase (325 aa).

7–13 (GSTGRVG) contributes to the NADP(+) binding site. The substrate site is built by R84 and R90. Residues N97 and 120 to 122 (VTN) contribute to the NADP(+) site. The substrate site is built by N122 and R153. H177 (proton acceptor) is an active-site residue.

Belongs to the LDH/MDH superfamily.

It catalyses the reaction (S)-malate + NADP(+) = oxaloacetate + NADPH + H(+). It carries out the reaction (S)-malate + NAD(+) = oxaloacetate + NADH + H(+). In terms of biological role, catalyzes the reversible oxidation of malate to oxaloacetate. Can use NAD(+) and NADP(+) with similar specific activity. The chain is Malate dehydrogenase from Methanothermobacter marburgensis (strain ATCC BAA-927 / DSM 2133 / JCM 14651 / NBRC 100331 / OCM 82 / Marburg) (Methanobacterium thermoautotrophicum).